A 528-amino-acid polypeptide reads, in one-letter code: uncharacterized protein (528 aa).

Positions 1–51 are disordered; sequence MEHPKRPTPKNEALHIDASGRGESSFSVHRSHSGGHEPFAPSPGSSIGASV. Tandem repeats lie at residues 185-213 and 285-313. Positions 185–313 are 2 X 29 AA repeats; it reads EQEEEYISNS…EEKRKLQQAL (129 aa). 2 disordered regions span residues 467 to 497 and 509 to 528; these read RAHGSSPPTVVVQPSTSRAGSNSTANINNDT and TVHPTQRATPARNERPDSHY. The span at 472-496 shows a compositional bias: polar residues; the sequence is SPPTVVVQPSTSRAGSNSTANINND.

This is an uncharacterized protein from Caenorhabditis elegans.